Here is a 185-residue protein sequence, read N- to C-terminus: Ribosome-recycling factor (185 aa).

Belongs to the RRF family.

It is found in the cytoplasm. Its function is as follows. Responsible for the release of ribosomes from messenger RNA at the termination of protein biosynthesis. May increase the efficiency of translation by recycling ribosomes from one round of translation to another. In Thermotoga sp. (strain RQ2), this protein is Ribosome-recycling factor.